The chain runs to 404 residues: Serine/threonine-protein kinase UCN (404 aa).

The 319-residue stretch at 22–340 (LKVLKLLGKG…AAEIKEHAFF (319 aa)) folds into the Protein kinase domain. ATP-binding positions include 28–36 (LGKGATGTV) and Lys55. Asp153 (proton acceptor) is an active-site residue. The segment at 185–207 (EFYHLSDPEPDPNPESNLSHNKK) is disordered. The region spanning 341–404 (KGVRWELLTE…CSENNPFVDF (64 aa)) is the AGC-kinase C-terminal domain.

The protein belongs to the protein kinase superfamily. AGC Ser/Thr protein kinase family. As to expression, expressed in the epidermis and cortex of the transition zone of the root apex and developing flowers. Expressed in rosette leaves, stems and siliques.

Its subcellular location is the cytoplasm. The protein resides in the nucleus. It carries out the reaction L-seryl-[protein] + ATP = O-phospho-L-seryl-[protein] + ADP + H(+). The catalysed reaction is L-threonyl-[protein] + ATP = O-phospho-L-threonyl-[protein] + ADP + H(+). In terms of biological role, regulates planar ovule integument development by suppressing aberrantly oriented growth. Maintains planar growth of integuments by repressing the developmental regulator and transcription factor KAN4 which is involved in the control of early integument growth and polarity. Restricts growth in stamen filaments, petals, and cotyledons. The polypeptide is Serine/threonine-protein kinase UCN (Arabidopsis thaliana (Mouse-ear cress)).